A 220-amino-acid chain; its full sequence is Large ribosomal subunit protein uL3 (220 aa).

The tract at residues 130 to 156 (AIKRHGQSRGPMSHGSHFHRAPGSVGM) is disordered.

It belongs to the universal ribosomal protein uL3 family. In terms of assembly, part of the 50S ribosomal subunit. Forms a cluster with proteins L14 and L19.

In terms of biological role, one of the primary rRNA binding proteins, it binds directly near the 3'-end of the 23S rRNA, where it nucleates assembly of the 50S subunit. The chain is Large ribosomal subunit protein uL3 from Staphylococcus aureus (strain Mu3 / ATCC 700698).